Consider the following 210-residue polypeptide: Uridine kinase (210 aa).

12-19 serves as a coordination point for ATP; sequence GGSGSGKT.

This sequence belongs to the uridine kinase family.

The protein localises to the cytoplasm. It catalyses the reaction uridine + ATP = UMP + ADP + H(+). The catalysed reaction is cytidine + ATP = CMP + ADP + H(+). It functions in the pathway pyrimidine metabolism; CTP biosynthesis via salvage pathway; CTP from cytidine: step 1/3. Its pathway is pyrimidine metabolism; UMP biosynthesis via salvage pathway; UMP from uridine: step 1/1. The chain is Uridine kinase from Leuconostoc citreum (strain KM20).